The chain runs to 38 residues: Large ribosomal subunit protein bL36 (38 aa).

Belongs to the bacterial ribosomal protein bL36 family.

The sequence is that of Large ribosomal subunit protein bL36 from Ralstonia nicotianae (strain ATCC BAA-1114 / GMI1000) (Ralstonia solanacearum).